Reading from the N-terminus, the 298-residue chain is Riboflavin transporter (298 aa).

9 consecutive transmembrane segments (helical) span residues 8–28 (LQGA…NSVA), 35–55 (FGLP…VVIL), 79–99 (VFLA…PVPI), 101–121 (QGIA…GLWL), 125–145 (VGMA…IILE), 151–171 (FNLA…YSLM), 184–204 (MVVY…LPDW), 211–231 (TVWL…WAIA), and 258–278 (WLVF…IIVL). 2 consecutive EamA domains span residues 10 to 144 (GALW…MIIL) and 156 to 284 (LLPV…AFIT).

The protein belongs to the drug/metabolite transporter (DMT) superfamily. 10 TMS drug/metabolite exporter (DME) (TC 2.A.7.3) family.

The protein resides in the cell membrane. Functionally, transports riboflavin into the cell. This chain is Riboflavin transporter, found in Vibrio cholerae serotype O1 (strain ATCC 39315 / El Tor Inaba N16961).